We begin with the raw amino-acid sequence, 123 residues long: Protein Wnt-7a (123 aa).

Serine 1 is lipidated: O-palmitoleoyl serine; by PORCN. The tract at residues 33–61 (VEPVRASRNKRPTFLKIKKPLSYLKPMDT) is disordered linker. Cysteines 89 and 104 form a disulfide. Residue asparagine 90 is glycosylated (N-linked (GlcNAc...) asparagine).

This sequence belongs to the Wnt family. Palmitoleoylation is required for efficient binding to frizzled receptors. Depalmitoleoylation leads to Wnt signaling pathway inhibition.

The protein resides in the secreted. It localises to the extracellular space. It is found in the extracellular matrix. Its function is as follows. Ligand for members of the frizzled family of seven transmembrane receptors that functions in the canonical Wnt/beta-catenin signaling pathway. Plays an important role in embryonic development, including dorsal versus ventral patterning during limb development, skeleton development and urogenital tract development. Required for central nervous system (CNS) angiogenesis and blood-brain barrier regulation. This chain is Protein Wnt-7a (WNT-7A), found in Plethodon jordani (Red-cheeked salamander).